The primary structure comprises 312 residues: Coiled-coil domain-containing protein 42 homolog (312 aa).

Coiled coils occupy residues 34–121 (RLLE…RLKE) and 172–233 (ATHQ…WESQ).

It belongs to the CFAP73 family.

This is Coiled-coil domain-containing protein 42 homolog from Nematostella vectensis (Starlet sea anemone).